The sequence spans 459 residues: 4,4'-diaponeurosporen-aldehyde dehydrogenase (459 aa).

NAD(+) contacts are provided by residues 114–115 (FN) and 188–189 (GS). Glu-210 (proton acceptor) is an active-site residue. Residue Met-211 coordinates NAD(+). The Nucleophile role is filled by Cys-244. NAD(+) is bound at residue Glu-336.

It belongs to the aldehyde dehydrogenase family.

It carries out the reaction 4,4'-diaponeurosporenal + NAD(+) + H2O = 4,4'-diaponeurosporenoate + NADH + 2 H(+). It functions in the pathway carotenoid biosynthesis; staphyloxanthin biosynthesis; staphyloxanthin from farnesyl diphosphate. Its function is as follows. Involved in the biosynthesis of the yellow-orange carotenoid staphyloxanthin, which plays a role in the virulence via its protective function against oxidative stress. Catalyzes the oxidation of 4,4'-diaponeurosporen-4-al to yield 4,4'-diaponeurosporenoic acid. This is 4,4'-diaponeurosporen-aldehyde dehydrogenase from Staphylococcus aureus (strain NCTC 8325 / PS 47).